Here is a 611-residue protein sequence, read N- to C-terminus: Dihydroxy-acid dehydratase (611 aa).

Asp-81 contributes to the Mg(2+) binding site. Position 122 (Cys-122) interacts with [2Fe-2S] cluster. Residues Asp-123 and Lys-124 each coordinate Mg(2+). Lys-124 bears the N6-carboxylysine mark. Position 195 (Cys-195) interacts with [2Fe-2S] cluster. Glu-491 provides a ligand contact to Mg(2+). The active-site Proton acceptor is Ser-517.

It belongs to the IlvD/Edd family. Homodimer. [2Fe-2S] cluster is required as a cofactor. Requires Mg(2+) as cofactor.

The enzyme catalyses (2R)-2,3-dihydroxy-3-methylbutanoate = 3-methyl-2-oxobutanoate + H2O. It carries out the reaction (2R,3R)-2,3-dihydroxy-3-methylpentanoate = (S)-3-methyl-2-oxopentanoate + H2O. It participates in amino-acid biosynthesis; L-isoleucine biosynthesis; L-isoleucine from 2-oxobutanoate: step 3/4. Its pathway is amino-acid biosynthesis; L-valine biosynthesis; L-valine from pyruvate: step 3/4. Its function is as follows. Functions in the biosynthesis of branched-chain amino acids. Catalyzes the dehydration of (2R,3R)-2,3-dihydroxy-3-methylpentanoate (2,3-dihydroxy-3-methylvalerate) into 2-oxo-3-methylpentanoate (2-oxo-3-methylvalerate) and of (2R)-2,3-dihydroxy-3-methylbutanoate (2,3-dihydroxyisovalerate) into 2-oxo-3-methylbutanoate (2-oxoisovalerate), the penultimate precursor to L-isoleucine and L-valine, respectively. The sequence is that of Dihydroxy-acid dehydratase from Brucella canis (strain ATCC 23365 / NCTC 10854 / RM-666).